Consider the following 66-residue polypeptide: Photosystem II reaction center protein J (66 aa).

A helical membrane pass occupies residues 37 to 57 (LWLVATAGGMAVLFVVGLFFY).

The protein belongs to the PsbJ family. In terms of assembly, PSII is composed of 1 copy each of membrane proteins PsbA, PsbB, PsbC, PsbD, PsbE, PsbF, PsbH, PsbI, PsbJ, PsbK, PsbL, PsbM, PsbT, PsbX, PsbY, PsbZ, Psb30/Ycf12, peripheral proteins PsbO, CyanoQ (PsbQ), PsbU, PsbV and a large number of cofactors. It forms dimeric complexes.

It is found in the cellular thylakoid membrane. One of the components of the core complex of photosystem II (PSII). PSII is a light-driven water:plastoquinone oxidoreductase that uses light energy to abstract electrons from H(2)O, generating O(2) and a proton gradient subsequently used for ATP formation. It consists of a core antenna complex that captures photons, and an electron transfer chain that converts photonic excitation into a charge separation. The protein is Photosystem II reaction center protein J of Synechococcus sp. (strain WH7803).